Reading from the N-terminus, the 512-residue chain is ATP synthase subunit alpha 2 (512 aa).

Position 169-176 (169-176) interacts with ATP; that stretch reads GDRQTGKT.

Belongs to the ATPase alpha/beta chains family. In terms of assembly, F-type ATPases have 2 components, CF(1) - the catalytic core - and CF(0) - the membrane proton channel. CF(1) has five subunits: alpha(3), beta(3), gamma(1), delta(1), epsilon(1). CF(0) has four main subunits: a(1), b(1), b'(1) and c(9-12).

It is found in the cell inner membrane. It catalyses the reaction ATP + H2O + 4 H(+)(in) = ADP + phosphate + 5 H(+)(out). Functionally, produces ATP from ADP in the presence of a proton gradient across the membrane. The alpha chain is a regulatory subunit. The chain is ATP synthase subunit alpha 2 from Dinoroseobacter shibae (strain DSM 16493 / NCIMB 14021 / DFL 12).